The sequence spans 1868 residues: Dedicator of cytokinesis protein 5 (1868 aa).

The SH3 domain maps to 8–69; it reads KRQKYGVAIY…PETYIHLKEA (62 aa). Ser-365 is modified (phosphoserine). The C2 DOCK-type domain occupies 443-627; sequence RNDIYVTLIH…DSFQIATLIC (185 aa). Lys-818 bears the N6-acetyllysine mark. The 412-residue stretch at 1231–1642 folds into the DOCKER domain; the sequence is YKDKKREDIY…VEKLYGVITL (412 aa). Residues 1681-1692 are compositionally biased toward low complexity; the sequence is STSSNSSDNASS. 2 disordered regions span residues 1681–1730 and 1742–1868; these read STSS…RISK and QVIA…PGSQ. Basic and acidic residues predominate over residues 1704–1728; that stretch reads LFERRASSGARVEDLPPKEDSENRI. 5 positions are modified to phosphoserine: Ser-1755, Ser-1765, Ser-1771, Ser-1784, and Ser-1788. Thr-1793 is modified (phosphothreonine). Residues 1796–1810 show a composition bias toward polar residues; that stretch reads ATRTLSSPSLQTDGL. Phosphoserine occurs at positions 1832 and 1867.

The protein belongs to the DOCK family. In terms of assembly, interacts with CRK and CRKL. Interacts (via N-terminus) with tensin TNS3 (via N-terminus); the interaction increases DOCK5 guanine nucleotide exchange activity towards Rac. Interacts with ELMO1. In terms of tissue distribution, highly expressed in lens, where it predominantly localizes to anterior epithelial cells, and is weakly expressed in lens fiber (at protein level). Expressed in brain, eye, lung, spleen and kidney, but not in thymus or peripheral blood leukocytes.

The protein resides in the cytoplasm. It localises to the cell membrane. Its subcellular location is the cell projection. It is found in the podosome. In terms of biological role, guanine nucleotide exchange factor (GEF) for Rho and Rac. GEF proteins activate small GTPases by exchanging bound GDP for free GTP. Along with DOCK1, mediates CRK/CRKL regulation of epithelial and endothelial cell spreading and migration on type IV collagen. In Mus musculus (Mouse), this protein is Dedicator of cytokinesis protein 5.